An 812-amino-acid polypeptide reads, in one-letter code: Probable inorganic carbon transporter subunit DabA (812 aa).

Zn(2+) contacts are provided by C338, D340, H498, and C513.

It belongs to the inorganic carbon transporter (TC 9.A.2) DabA family. In terms of assembly, forms a complex with DabB. The cofactor is Zn(2+).

The protein resides in the cell inner membrane. Part of an energy-coupled inorganic carbon pump. This Methylobacterium sp. (strain 4-46) protein is Probable inorganic carbon transporter subunit DabA.